The following is a 620-amino-acid chain: Ion-translocating oxidoreductase complex subunit C (620 aa).

4Fe-4S ferredoxin-type domains follow at residues 366–397 (TEMGLSEPEQSCIRCGLCVDACPAGLLPQQLY) and 407–436 (KARNHNLFDCIECGACAYVCPSNIPLVQYY). Residues Cys377, Cys380, Cys383, Cys387, Cys416, Cys419, Cys422, and Cys426 each contribute to the [4Fe-4S] cluster site.

The protein belongs to the 4Fe4S bacterial-type ferredoxin family. RnfC subfamily. In terms of assembly, the complex is composed of six subunits: RnfA, RnfB, RnfC, RnfD, RnfE and RnfG. [4Fe-4S] cluster is required as a cofactor.

The protein resides in the cell inner membrane. Functionally, part of a membrane-bound complex that couples electron transfer with translocation of ions across the membrane. The sequence is that of Ion-translocating oxidoreductase complex subunit C from Yersinia pestis bv. Antiqua (strain Antiqua).